The primary structure comprises 64 residues: Large ribosomal subunit protein bL28 (64 aa).

Residues 1–23 (MARKDQISHRGPLSGNNRSHALN) are disordered.

Belongs to the bacterial ribosomal protein bL28 family.

This chain is Large ribosomal subunit protein bL28, found in Mesomycoplasma hyopneumoniae (strain 232) (Mycoplasma hyopneumoniae).